A 410-amino-acid polypeptide reads, in one-letter code: D-3-phosphoglycerate dehydrogenase (410 aa).

NAD(+)-binding positions include His161–Ile162, Asp181, Ala238–Arg240, and Asp264. Arg240 is a catalytic residue. Glu269 is a catalytic residue. The active-site Proton donor is the His292. His292–Gly295 serves as a coordination point for NAD(+). The 72-residue stretch at Arg339–Tyr410 folds into the ACT domain.

Belongs to the D-isomer specific 2-hydroxyacid dehydrogenase family. In terms of assembly, homotetramer.

It catalyses the reaction (2R)-3-phosphoglycerate + NAD(+) = 3-phosphooxypyruvate + NADH + H(+). The catalysed reaction is (R)-2-hydroxyglutarate + NAD(+) = 2-oxoglutarate + NADH + H(+). It participates in amino-acid biosynthesis; L-serine biosynthesis; L-serine from 3-phospho-D-glycerate: step 1/3. Its activity is regulated as follows. In bacteria displays feedback inhibition by L-serine. Catalyzes the reversible oxidation of 3-phospho-D-glycerate to 3-phosphonooxypyruvate, the first step of the phosphorylated L-serine biosynthesis pathway. Also catalyzes the reversible oxidation of 2-hydroxyglutarate to 2-oxoglutarate. In Escherichia coli O6:H1 (strain CFT073 / ATCC 700928 / UPEC), this protein is D-3-phosphoglycerate dehydrogenase (serA).